Here is a 166-residue protein sequence, read N- to C-terminus: PTS system glucose-specific EIIA component (166 aa).

The PTS EIIA type-1 domain maps to D34–N138. Zn(2+)-binding residues include H71 and H86. The active-site Tele-phosphohistidine intermediate; for EIIA activity is the H86. Residue H86 is modified to Phosphohistidine; by HPr.

In terms of assembly, heterodimer with glycerol kinase (glpk). It depends on Zn(2+) as a cofactor.

It is found in the cytoplasm. The phosphoenolpyruvate-dependent sugar phosphotransferase system (sugar PTS), a major carbohydrate active transport system, catalyzes the phosphorylation of incoming sugar substrates concomitantly with their translocation across the cell membrane. The enzyme II complex composed of PtsG and Crr is involved in glucose transport. The sequence is that of PTS system glucose-specific EIIA component (crr) from Staphylococcus epidermidis (strain ATCC 35984 / DSM 28319 / BCRC 17069 / CCUG 31568 / BM 3577 / RP62A).